The sequence spans 317 residues: Type II methyltransferase M.NgoBI (317 aa).

An SAM-dependent MTase C5-type domain is found at 2-302 (YKTIDLFSGI…KICSLLFPAR (301 aa)). Residue C71 is part of the active site.

Belongs to the class I-like SAM-binding methyltransferase superfamily. C5-methyltransferase family.

It catalyses the reaction a 2'-deoxycytidine in DNA + S-adenosyl-L-methionine = a 5-methyl-2'-deoxycytidine in DNA + S-adenosyl-L-homocysteine + H(+). Its function is as follows. A methylase, recognizes the double-stranded sequence 5'-RGCGCY-3', methylates C-5 on both strands, and protects the DNA from cleavage by the NgoBI endonuclease. The chain is Type II methyltransferase M.NgoBI (ngoBIM) from Neisseria gonorrhoeae.